The primary structure comprises 339 residues: Glucokinase (339 aa).

Residue 16–21 (GDIGGT) coordinates ATP.

The protein belongs to the bacterial glucokinase family.

The protein localises to the cytoplasm. It carries out the reaction D-glucose + ATP = D-glucose 6-phosphate + ADP + H(+). In Rhizobium meliloti (strain 1021) (Ensifer meliloti), this protein is Glucokinase.